Consider the following 212-residue polypeptide: ATP-dependent dethiobiotin synthetase BioD (212 aa).

12–17 is an ATP binding site; it reads DCGKTF. Thr16 serves as a coordination point for Mg(2+). Lys33 is a catalytic residue. Ser37 lines the substrate pocket. ATP is bound by residues Asp50, 110–113, and 170–171; these read EGAG and NC. Positions 50 and 110 each coordinate Mg(2+).

This sequence belongs to the dethiobiotin synthetase family. Homodimer. It depends on Mg(2+) as a cofactor.

The protein resides in the cytoplasm. The catalysed reaction is (7R,8S)-7,8-diammoniononanoate + CO2 + ATP = (4R,5S)-dethiobiotin + ADP + phosphate + 3 H(+). It participates in cofactor biosynthesis; biotin biosynthesis; biotin from 7,8-diaminononanoate: step 1/2. Functionally, catalyzes a mechanistically unusual reaction, the ATP-dependent insertion of CO2 between the N7 and N8 nitrogen atoms of 7,8-diaminopelargonic acid (DAPA, also called 7,8-diammoniononanoate) to form a ureido ring. This Legionella pneumophila (strain Lens) protein is ATP-dependent dethiobiotin synthetase BioD.